The primary structure comprises 79 residues: Exodeoxyribonuclease 7 small subunit (79 aa).

It belongs to the XseB family. Heterooligomer composed of large and small subunits.

It is found in the cytoplasm. The catalysed reaction is Exonucleolytic cleavage in either 5'- to 3'- or 3'- to 5'-direction to yield nucleoside 5'-phosphates.. Functionally, bidirectionally degrades single-stranded DNA into large acid-insoluble oligonucleotides, which are then degraded further into small acid-soluble oligonucleotides. This chain is Exodeoxyribonuclease 7 small subunit, found in Lactococcus lactis subsp. cremoris (strain SK11).